The following is a 411-amino-acid chain: Calmodulin-binding receptor-like cytoplasmic kinase 2 (411 aa).

2 disordered regions span residues 1-44 (MPSR…DTTT) and 66-99 (SNYI…YGNA). 2 stretches are compositionally biased toward low complexity: residues 16-44 (TTSS…DTTT) and 66-95 (SNYI…VQRS). T108 is modified (phosphothreonine). The region spanning 119-398 (FSPSFRIGQG…MKKCSEILWG (280 aa)) is the Protein kinase domain. Residues 125–133 (IGQGGFGTV) and K147 contribute to the ATP site. Residues 134 to 159 (YKVKLRDGKTFAVKRAKKSMHDDRQG) form a caM-binding region. D247 acts as the Proton acceptor in catalysis. Residues S251 and S283 each carry the phosphoserine modification. Residues T284 and T289 each carry the phosphothreonine modification. Y297 is subject to Phosphotyrosine.

It belongs to the protein kinase superfamily. Ser/Thr protein kinase family. Interacts with calmodulin (CaM) in a Ca(2+)-dependent manner.

Its subcellular location is the cytoplasm. It carries out the reaction L-seryl-[protein] + ATP = O-phospho-L-seryl-[protein] + ADP + H(+). The catalysed reaction is L-threonyl-[protein] + ATP = O-phospho-L-threonyl-[protein] + ADP + H(+). The sequence is that of Calmodulin-binding receptor-like cytoplasmic kinase 2 (CRCK2) from Arabidopsis thaliana (Mouse-ear cress).